The following is a 185-amino-acid chain: MDKVLDSALLSSANKRKGILAIGAHPDDIELGCGASLARLAQKGIYIAAVVMTTGNSGTDGIIDRHEESRNALKILGCHQTIHLNFADTRAHLQLNDMISALEDIIKNQIPSDVEIMRVYTMHDADRHQDHLAVYQASMVACRTIPQILGYETPSTWLSFMPQVFESVKEEYFTVKLAALKKHKS.

The protein belongs to the PIGL family.

This is an uncharacterized protein from Escherichia coli (strain K12).